The chain runs to 638 residues: Chaperone protein DnaK (638 aa).

The residue at position 198 (T198) is a Phosphothreonine; by autocatalysis. The disordered stretch occupies residues 598–638; it reads YEASQKEAAEADAKADAAKDSDVVDADFEEIDEDDDKKKSA. Residues 601 to 619 are compositionally biased toward basic and acidic residues; the sequence is SQKEAAEADAKADAAKDSD. Residues 620–632 are compositionally biased toward acidic residues; that stretch reads VVDADFEEIDEDD.

This sequence belongs to the heat shock protein 70 family.

Functionally, acts as a chaperone. The polypeptide is Chaperone protein DnaK (Mesorhizobium japonicum (strain LMG 29417 / CECT 9101 / MAFF 303099) (Mesorhizobium loti (strain MAFF 303099))).